Here is a 480-residue protein sequence, read N- to C-terminus: Probable cytosol aminopeptidase (480 aa).

Residues Lys-248 and Asp-253 each contribute to the Mn(2+) site. Lys-260 is an active-site residue. Mn(2+) is bound by residues Asp-271, Asp-330, and Glu-332. Residue Arg-334 is part of the active site.

Belongs to the peptidase M17 family. Mn(2+) is required as a cofactor.

Its subcellular location is the cytoplasm. The catalysed reaction is Release of an N-terminal amino acid, Xaa-|-Yaa-, in which Xaa is preferably Leu, but may be other amino acids including Pro although not Arg or Lys, and Yaa may be Pro. Amino acid amides and methyl esters are also readily hydrolyzed, but rates on arylamides are exceedingly low.. It carries out the reaction Release of an N-terminal amino acid, preferentially leucine, but not glutamic or aspartic acids.. Functionally, presumably involved in the processing and regular turnover of intracellular proteins. Catalyzes the removal of unsubstituted N-terminal amino acids from various peptides. In Solibacter usitatus (strain Ellin6076), this protein is Probable cytosol aminopeptidase.